A 472-amino-acid chain; its full sequence is Nuclear hormone receptor family member nhr-2 (472 aa).

Polar residues-rich tracts occupy residues 57-83 (TATN…LSQI), 90-112 (NDTI…HNQP), 138-147 (LSSTQSSPDN), and 159-171 (VRRN…SAST). Disordered regions lie at residues 57–112 (TATN…HNQP) and 138–184 (LSST…RTNT). The nuclear receptor DNA-binding region spans 215 to 297 (KDRCMVCGDN…VGMNRDNVRV (83 aa)). 2 NR C4-type zinc fingers span residues 218-238 (CMVC…CEGC) and 267-285 (CAAN…FAKC).

The protein belongs to the nuclear hormone receptor family.

It is found in the nucleus. In terms of biological role, orphan nuclear receptor. The chain is Nuclear hormone receptor family member nhr-2 (nhr-2) from Caenorhabditis elegans.